The sequence spans 289 residues: Acetyl-coenzyme A carboxylase carboxyl transferase subunit beta (289 aa).

The 256-residue stretch at 34–289 (MWVKCNKCGE…KLINMHQNSF (256 aa)) folds into the CoA carboxyltransferase N-terminal domain. Zn(2+) is bound by residues cysteine 38, cysteine 41, cysteine 57, and cysteine 60. The segment at 38 to 60 (CNKCGEILYQNDLEKNYMVCNLC) adopts a C4-type zinc-finger fold.

This sequence belongs to the AccD/PCCB family. In terms of assembly, acetyl-CoA carboxylase is a heterohexamer composed of biotin carboxyl carrier protein (AccB), biotin carboxylase (AccC) and two subunits each of ACCase subunit alpha (AccA) and ACCase subunit beta (AccD). Zn(2+) serves as cofactor.

It is found in the cytoplasm. The enzyme catalyses N(6)-carboxybiotinyl-L-lysyl-[protein] + acetyl-CoA = N(6)-biotinyl-L-lysyl-[protein] + malonyl-CoA. Its pathway is lipid metabolism; malonyl-CoA biosynthesis; malonyl-CoA from acetyl-CoA: step 1/1. Functionally, component of the acetyl coenzyme A carboxylase (ACC) complex. Biotin carboxylase (BC) catalyzes the carboxylation of biotin on its carrier protein (BCCP) and then the CO(2) group is transferred by the transcarboxylase to acetyl-CoA to form malonyl-CoA. This is Acetyl-coenzyme A carboxylase carboxyl transferase subunit beta from Clostridium botulinum (strain Kyoto / Type A2).